The chain runs to 403 residues: Zinc finger HIT domain-containing protein 2 (403 aa).

Methionine 1 carries the N-acetylmethionine modification. Positions 7, 10, 22, 25, 30, 34, 38, and 41 each coordinate Zn(2+). The HIT-type zinc finger occupies 7 to 41; sequence CGFCPAGEVQPARYTCPRCNAPYCSLRCYRTHGTC. A disordered region spans residues 72 to 98; it reads RQQRETEDEPGEAGLSSGPAPGGLSGL. Phosphothreonine is present on threonine 161.

Interacts (via HIT-type zinc finger) with RUVBL2 in the presence of ATP or ADP; shows a stronger interaction in the presence of ADP. As to expression, low expression in most tissues; highly expressed in testis.

Functionally, may act as a bridging factor mediating the interaction between the R2TP/Prefoldin-like (R2TP/PFDL) complex and U5 small nuclear ribonucleoprotein (U5 snRNP). Required for the interaction of R2TP complex subunit RPAP3 and prefoldin-like subunit URI1 with U5 snRNP proteins EFTUD2 and PRPF8. May play a role in regulating the composition of the U5 snRNP complex. The protein is Zinc finger HIT domain-containing protein 2 (ZNHIT2) of Homo sapiens (Human).